A 352-amino-acid polypeptide reads, in one-letter code: MLSLQTIAKMAVATNTYSKCHYPILKVFGLWWKNNTLNGPIKICNHCNNIMVGEYPMCYNHGMSLDIALIRAVKERNMSLVQLFTEWGGNIDYGALCANTPSMQRLCESLGAKPPKGRMYMDTLIHFSDTLNDNDLIRGYEIFDDNSVLDCVNLIRLKIMLTLKARISLMEQLDQIALKQLLQRYWYAMAVQHNLTIAIHYFDNHIPNIKPFSLRCALYFNDPFKIHDACRTVNMDPNEMMNIACQQDLNFQSIYYCYLLGADINQAMLMSLKYGHLSNMWFCIDLGADAFKEAGVLAGKKNRRVLQYILGLNIFKRELIPPCKDPDPYQIQILLKNYILKNVSTVFTYYCQ.

The protein belongs to the asfivirus MGF 360 family.

Its function is as follows. Plays a role in virus cell tropism, and may be required for efficient virus replication in macrophages. This is Protein MGF 360-16R from African swine fever virus (isolate Tick/South Africa/Pretoriuskop Pr4/1996) (ASFV).